The sequence spans 76 residues: Large ribosomal subunit protein uL24 (76 aa).

It belongs to the universal ribosomal protein uL24 family. In terms of assembly, part of the 50S ribosomal subunit.

Functionally, one of two assembly initiator proteins, it binds directly to the 5'-end of the 23S rRNA, where it nucleates assembly of the 50S subunit. Its function is as follows. One of the proteins that surrounds the polypeptide exit tunnel on the outside of the subunit. In Wolinella succinogenes (strain ATCC 29543 / DSM 1740 / CCUG 13145 / JCM 31913 / LMG 7466 / NCTC 11488 / FDC 602W) (Vibrio succinogenes), this protein is Large ribosomal subunit protein uL24.